Here is a 200-residue protein sequence, read N- to C-terminus: Small ribosomal subunit protein uS4c (200 aa).

Positions 88–148 (IRLDNTIFNL…PKSYYIFKLC (61 aa)) constitute an S4 RNA-binding domain.

This sequence belongs to the universal ribosomal protein uS4 family. As to quaternary structure, part of the 30S ribosomal subunit.

The protein localises to the plastid. The protein resides in the apicoplast. One of the primary rRNA binding proteins, it binds directly to 16S rRNA where it nucleates assembly of the body of the 30S subunit. The sequence is that of Small ribosomal subunit protein uS4c (rps4) from Eimeria tenella (Coccidian parasite).